Consider the following 380-residue polypeptide: Putative S-(hydroxymethyl)glutathione dehydrogenase 2 (380 aa).

Residue Cys50 participates in Zn(2+) binding. His51 lines the NAD(+) pocket. Zn(2+) is bound by residues His72, Glu73, Cys102, Cys105, Cys108, Cys116, and Cys179. NAD(+) is bound by residues 204–209, Asp228, and 297–299; these read GLGSVG and IGV.

The protein belongs to the zinc-containing alcohol dehydrogenase family. Class-III subfamily. Zn(2+) serves as cofactor.

It carries out the reaction a primary alcohol + NAD(+) = an aldehyde + NADH + H(+). It catalyses the reaction a secondary alcohol + NAD(+) = a ketone + NADH + H(+). The enzyme catalyses S-(hydroxymethyl)glutathione + NADP(+) = S-formylglutathione + NADPH + H(+). The catalysed reaction is S-(hydroxymethyl)glutathione + NAD(+) = S-formylglutathione + NADH + H(+). It carries out the reaction S-nitrosoglutathione + NADH + H(+) = S-(hydroxysulfenamide)glutathione + NAD(+). Oxidizes long-chain alcohols and, in the presence of glutathione, is able to oxidize formaldehyde. Also acts as a S-nitroso-glutathione reductase by catalyzing the NADH-dependent reduction of S-nitrosoglutathione, thereby regulating protein S-nitrosylation. In Schizosaccharomyces pombe (strain 972 / ATCC 24843) (Fission yeast), this protein is Putative S-(hydroxymethyl)glutathione dehydrogenase 2.